We begin with the raw amino-acid sequence, 477 residues long: Stromelysin-1 (477 aa).

The N-terminal stretch at 1 to 17 (MKSLPILLLLCVAVCSA) is a signal peptide. Positions 18 to 99 (YPLDGAARGE…PRCGVPDVGH (82 aa)) are cleaved as a propeptide — activation peptide. Residues 90-97 (PRCGVPDV) carry the Cysteine switch motif. C92 contributes to the Zn(2+) binding site. The Ca(2+) site is built by D124 and D158. Zn(2+) is bound by residues H168 and D170. Positions 175, 176, 178, and 180 each coordinate Ca(2+). H183 lines the Zn(2+) pocket. 3 residues coordinate Ca(2+): G190, N192, and D194. H196 lines the Zn(2+) pocket. Ca(2+) is bound by residues D198, D199, and E201. Position 218 (H218) interacts with Zn(2+). The active site involves E219. Positions 222 and 228 each coordinate Zn(2+). Positions 262 to 287 (LYGPPPDSPETPLVPTEPVPPEPGTP) are disordered. The segment covering 276 to 285 (PTEPVPPEPG) has biased composition (pro residues). Hemopexin repeat units follow at residues 287-336 (PANC…WPSL), 337-383 (PSGV…GFPP), 385-433 (VRKI…FPGI), and 434-477 (DSKI…WLNC). C290 and C477 are oxidised to a cystine. D297 is a Ca(2+) binding site. D389 and D438 together coordinate Ca(2+).

This sequence belongs to the peptidase M10A family. Requires Ca(2+) as cofactor. Zn(2+) is required as a cofactor. Directly cleaved by HTRA2 to produce active form.

The protein localises to the secreted. It is found in the extracellular space. It localises to the extracellular matrix. Its subcellular location is the nucleus. The protein resides in the cytoplasm. It carries out the reaction Preferential cleavage where P1', P2' and P3' are hydrophobic residues.. Enzymatic activity is activated by HTRA2 in dopaminergic cells upon mitochondrial stress. Functionally, metalloproteinase with a rather broad substrate specificity that can degrade fibronectin, laminin, gelatins of type I, III, IV, and V; collagens III, IV, X, and IX, and cartilage proteoglycans. Activates different molecules including growth factors, plasminogen or other matrix metalloproteinases such as MMP9. Once released into the extracellular matrix (ECM), the inactive pro-enzyme is activated by the plasmin cascade signaling pathway. Also acts intracellularly. For example, in dopaminergic neurons, gets activated by the serine protease HTRA2 upon stress and plays a pivotal role in DA neuronal degeneration by mediating microglial activation and alpha-synuclein/SNCA cleavage. In addition, plays a role in immune response and possesses antiviral activity against various viruses such as vesicular stomatitis virus, influenza A virus (H1N1) and human herpes virus 1. Mechanistically, translocates from the cytoplasm into the cell nucleus upon virus infection to influence NF-kappa-B activities. In Homo sapiens (Human), this protein is Stromelysin-1 (MMP3).